The primary structure comprises 471 residues: MSAGKIVQVIGPVVDVEFPLNDELPDINTALNIKKDDGSVLVTEVALELGDGVMRTIAMDGTDGLRRGLEVENTGASISVPVGDDTLGRVFNVLGDPIDGGAEFGPDAERMPIHRDAPKYDELNPTTEILETGIKVIDLLEPYVRGGKIGLFGGAGVGKTVLIQELIHNIAQGHNGISVFTGVGERTREGNDMYWEMKGSGVLKQTAMVYGQMNEPPGARMRVALTGLTIAEYFRDVKGQDVLLFIDNIFRFTQAGSEVSALLGRIPSAVGYQPTLATEMGQLQERITSTKKGSITSIQAVYVPADDYTDPAPATTFAHLDATTNLERALTQQGIYPAVDPLASTSTALAPEIIGQEHYDVATEVQRVLQRYHELQDIISILGMDELSDEEQTIVQRARRIQFFLSQPFSVASQFTGMDGKYVKLEDTIRSFKGILDGKYDDLPEDAFRNCGAIEDAVEKAKQMNDAVANN.

Residue 153–160 (GGAGVGKT) participates in ATP binding.

Belongs to the ATPase alpha/beta chains family. As to quaternary structure, F-type ATPases have 2 components, CF(1) - the catalytic core - and CF(0) - the membrane proton channel. CF(1) has five subunits: alpha(3), beta(3), gamma(1), delta(1), epsilon(1). CF(0) has three main subunits: a(1), b(2) and c(9-12). The alpha and beta chains form an alternating ring which encloses part of the gamma chain. CF(1) is attached to CF(0) by a central stalk formed by the gamma and epsilon chains, while a peripheral stalk is formed by the delta and b chains.

It localises to the cell membrane. It catalyses the reaction ATP + H2O + 4 H(+)(in) = ADP + phosphate + 5 H(+)(out). Produces ATP from ADP in the presence of a proton gradient across the membrane. The catalytic sites are hosted primarily by the beta subunits. The chain is ATP synthase subunit beta from Levilactobacillus brevis (strain ATCC 367 / BCRC 12310 / CIP 105137 / JCM 1170 / LMG 11437 / NCIMB 947 / NCTC 947) (Lactobacillus brevis).